The primary structure comprises 735 residues: Ion-translocating oxidoreductase complex subunit C (735 aa).

2 4Fe-4S ferredoxin-type domains span residues 368–397 (MGAPQEEKSCIRCSACADACPADLLPQQLY) and 407–436 (KATAHHIADCIECGACAWVCPSNIPLVQYF). [4Fe-4S] cluster contacts are provided by cysteine 377, cysteine 380, cysteine 383, cysteine 387, cysteine 416, cysteine 419, cysteine 422, and cysteine 426. The tract at residues 534–716 (QARAKQAAHP…ADPRKAAVAA (183 aa)) is disordered.

Belongs to the 4Fe4S bacterial-type ferredoxin family. RnfC subfamily. In terms of assembly, the complex is composed of six subunits: RsxA, RsxB, RsxC, RsxD, RsxE and RsxG. [4Fe-4S] cluster is required as a cofactor.

The protein resides in the cell inner membrane. In terms of biological role, part of a membrane-bound complex that couples electron transfer with translocation of ions across the membrane. Required to maintain the reduced state of SoxR. The chain is Ion-translocating oxidoreductase complex subunit C from Salmonella agona (strain SL483).